A 262-amino-acid polypeptide reads, in one-letter code: Methionine-rich nacre protein (262 aa).

The N-terminal stretch at 1–22 is a signal peptide; sequence MSIMRRILCLAVVIFIINDVSS. Residues 26-35 show a composition bias toward low complexity; sequence GNNKNWKKNG. Positions 26 to 84 are disordered; it reads GNNKNWKKNGMSLSSPGNKKPTGNNAVPQKSKMNNMNQNSLSQPKRSSPPGNSMYNMAN. Residues 36-84 are compositionally biased toward polar residues; it reads MSLSSPGNKKPTGNNAVPQKSKMNNMNQNSLSQPKRSSPPGNSMYNMAN.

Expressed in mantle and, after secretion, incorporated into acid-insoluble nacre matrix of the shell (at protein level). Expressed primarily in the mantle with highest level in the mantle pallium and lower level in the mantle edge.

It is found in the secreted. The sequence is that of Methionine-rich nacre protein from Pinctada maxima (Silver-lipped pearl oyster).